The sequence spans 503 residues: Glucose-6-phosphate 1-dehydrogenase (503 aa).

Residues 14-21 (GASGDLSK), arginine 49, and lysine 158 each bind NADP(+). Residues lysine 158, 188–192 (HYLGK), glutamate 226, and aspartate 245 contribute to the D-glucose 6-phosphate site. Histidine 250 acts as the Proton acceptor in catalysis. Lysine 341 contributes to the NADP(+) binding site. Lysine 344 contributes to the D-glucose 6-phosphate binding site. NADP(+)-binding residues include lysine 350, arginine 354, and arginine 376. Residue glutamine 378 participates in D-glucose 6-phosphate binding. NADP(+)-binding positions include 384–386 (YLK), arginine 471, and tyrosine 487.

The protein belongs to the glucose-6-phosphate dehydrogenase family.

The catalysed reaction is D-glucose 6-phosphate + NADP(+) = 6-phospho-D-glucono-1,5-lactone + NADPH + H(+). It participates in carbohydrate degradation; pentose phosphate pathway; D-ribulose 5-phosphate from D-glucose 6-phosphate (oxidative stage): step 1/3. Functionally, catalyzes the rate-limiting step of the oxidative pentose-phosphate pathway, which represents a route for the dissimilation of carbohydrates besides glycolysis. The main function of this enzyme is to provide reducing power (NADPH) and pentose phosphates for fatty acid and nucleic acid synthesis. The G6PDH activity is required to cope with hydrogen peroxide and potassium bisulfite stresses and plays a role in adaptation to conditions used in wine fermentations. In Hanseniaspora uvarum (Yeast), this protein is Glucose-6-phosphate 1-dehydrogenase.